We begin with the raw amino-acid sequence, 158 residues long: NAD(P)H-quinone oxidoreductase subunit J, chloroplastic (158 aa).

It belongs to the complex I 30 kDa subunit family. NDH is composed of at least 16 different subunits, 5 of which are encoded in the nucleus.

Its subcellular location is the plastid. The protein resides in the chloroplast thylakoid membrane. It carries out the reaction a plastoquinone + NADH + (n+1) H(+)(in) = a plastoquinol + NAD(+) + n H(+)(out). The catalysed reaction is a plastoquinone + NADPH + (n+1) H(+)(in) = a plastoquinol + NADP(+) + n H(+)(out). In terms of biological role, NDH shuttles electrons from NAD(P)H:plastoquinone, via FMN and iron-sulfur (Fe-S) centers, to quinones in the photosynthetic chain and possibly in a chloroplast respiratory chain. The immediate electron acceptor for the enzyme in this species is believed to be plastoquinone. Couples the redox reaction to proton translocation, and thus conserves the redox energy in a proton gradient. The protein is NAD(P)H-quinone oxidoreductase subunit J, chloroplastic of Illicium oligandrum (Star anise).